The chain runs to 363 residues: Translocating chain-associated membrane protein 1-like 1 (363 aa).

The Cytoplasmic portion of the chain corresponds to 1 to 29 (MGLRKKNARNPPVLSHEFMVQNHADMVSC). Residues 30–50 (VGMFFVLGLMFEGTSEMSIAF) traverse the membrane as a helical segment. The Lumenal segment spans residues 51 to 80 (LTLQHGVVVPAEGLPSGSRTLYHYGVKDLA). The chain crosses the membrane as a helical span at residues 81–101 (TVFFYMLVAIIIHATIQEYVL). Residues 102-120 (DKLSRRLQLTKGKQNKLNE) are Cytoplasmic-facing. A TLC domain is found at 116-324 (NKLNEAGQLS…TVWLQRWLED (209 aa)). The helical transmembrane segment at 121 to 141 (AGQLSVFYIVSGIWGMIILAS) threads the bilayer. Residues 142–159 (ENCLSDPTLLWKSQPHNM) lie on the Lumenal side of the membrane. A helical membrane pass occupies residues 160–179 (MTFQMKFFYISQLAYWFHSF). At 180 to 191 (PELYFQKVRKQD) the chain is on the cytoplasmic side. A helical transmembrane segment spans residues 192 to 214 (IPGQLIYIGLHLFHIGGAYLLYL). The Lumenal portion of the chain corresponds to 215–218 (NHLG). A helical membrane pass occupies residues 219–241 (LLLLMLHYAVELLSSVCSLLYFG). The Cytoplasmic segment spans residues 242–250 (DERYQKGLS). A helical membrane pass occupies residues 251–271 (LWPIVFISGRLVTLIVSVVTV). At 272-295 (GLHLAGTNRNGNALSGNVNVLAAK) the chain is on the lumenal side. A helical transmembrane segment spans residues 296 to 316 (IAVLSSSCSIQVYITWTLTTV). Topologically, residues 317–363 (WLQRWLEDANLHVCGRKRRSRARKGTENGVENPNRIDSPPKKKEKAP) are cytoplasmic. The interval 338–363 (ARKGTENGVENPNRIDSPPKKKEKAP) is disordered. A compositionally biased stretch (basic and acidic residues) spans 354-363 (SPPKKKEKAP).

The protein belongs to the TRAM family.

The protein localises to the endoplasmic reticulum membrane. Functionally, stimulatory or required for the translocation of secretory proteins across the ER membrane. The polypeptide is Translocating chain-associated membrane protein 1-like 1 (Tram1l1) (Mus musculus (Mouse)).